The following is a 262-amino-acid chain: Acyl-[acyl-carrier-protein]--UDP-N-acetylglucosamine O-acyltransferase (262 aa).

It belongs to the transferase hexapeptide repeat family. LpxA subfamily. As to quaternary structure, homotrimer.

Its subcellular location is the cytoplasm. The enzyme catalyses a (3R)-hydroxyacyl-[ACP] + UDP-N-acetyl-alpha-D-glucosamine = a UDP-3-O-[(3R)-3-hydroxyacyl]-N-acetyl-alpha-D-glucosamine + holo-[ACP]. Its pathway is glycolipid biosynthesis; lipid IV(A) biosynthesis; lipid IV(A) from (3R)-3-hydroxytetradecanoyl-[acyl-carrier-protein] and UDP-N-acetyl-alpha-D-glucosamine: step 1/6. Functionally, involved in the biosynthesis of lipid A, a phosphorylated glycolipid that anchors the lipopolysaccharide to the outer membrane of the cell. This is Acyl-[acyl-carrier-protein]--UDP-N-acetylglucosamine O-acyltransferase from Pectobacterium carotovorum subsp. carotovorum (strain PC1).